Consider the following 262-residue polypeptide: Capsid protein (262 aa).

The segment at 183–262 (APTIEAITRP…SHHRSPSPRK (80 aa)) is disordered. The Bipartite nuclear localization signal signature appears at 215-233 (RRRKVKTTVVYGRRRSKSR). Composition is skewed to basic residues over residues 215–234 (RRRK…KSRE) and 252–262 (SSHHRSPSPRK).

The protein belongs to the avihepadnavirus core antigen family. Homodimerizes, then multimerizes.

It is found in the virion. The protein resides in the host cytoplasm. In terms of biological role, self assembles to form an icosahedral capsid. Most capsid appear to be large particles with an icosahedral symmetry of T=4 and consist of 240 copies of capsid protein, though a fraction forms smaller T=3 particles consisting of 180 capsid proteins. Entering capsid are transported along microtubules to the nucleus. Phosphorylation of the capsid is thought to induce exposure of nuclear localization signal in the C-terminal portion of the capsid protein that allows binding to the nuclear pore complex via the importin (karyopherin-) alpha and beta. Capsids are imported in intact form through the nuclear pore into the nuclear basket, where it probably binds NUP153. Only capsids that contain the mature viral genome can release the viral DNA and capsid protein into the nucleoplasm. Immature capsids get stucked in the basket. Capsids encapsulate the pre-genomic RNA and the P protein. Pre-genomic RNA is reverse transcribed into DNA while the capsid is still in the cytoplasm. The capsid can then either be directed to the nucleus, providing more genome for transcription, or bud through the endoplasmic reticulum to provide new virions. This chain is Capsid protein (C), found in Duck hepatitis B virus (isolate Shanghai/DHBVQCA34) (DHBV).